Consider the following 298-residue polypeptide: UDP-3-O-acyl-N-acetylglucosamine deacetylase (298 aa).

Zn(2+) is bound by residues His80, His239, and Asp243. His266 (proton donor) is an active-site residue.

Belongs to the LpxC family. Requires Zn(2+) as cofactor.

The catalysed reaction is a UDP-3-O-[(3R)-3-hydroxyacyl]-N-acetyl-alpha-D-glucosamine + H2O = a UDP-3-O-[(3R)-3-hydroxyacyl]-alpha-D-glucosamine + acetate. Its pathway is glycolipid biosynthesis; lipid IV(A) biosynthesis; lipid IV(A) from (3R)-3-hydroxytetradecanoyl-[acyl-carrier-protein] and UDP-N-acetyl-alpha-D-glucosamine: step 2/6. In terms of biological role, catalyzes the hydrolysis of UDP-3-O-myristoyl-N-acetylglucosamine to form UDP-3-O-myristoylglucosamine and acetate, the committed step in lipid A biosynthesis. The sequence is that of UDP-3-O-acyl-N-acetylglucosamine deacetylase from Blochmanniella floridana.